Here is a 299-residue protein sequence, read N- to C-terminus: UTP--glucose-1-phosphate uridylyltransferase (299 aa).

It belongs to the UDPGP type 2 family.

The enzyme catalyses alpha-D-glucose 1-phosphate + UTP + H(+) = UDP-alpha-D-glucose + diphosphate. It participates in carbohydrate metabolism; nucleotide-sugar metabolism. Its pathway is capsule biogenesis; capsule polysaccharide biosynthesis. The sequence is that of UTP--glucose-1-phosphate uridylyltransferase (cap4C) from Streptococcus pneumoniae serotype 4 (strain ATCC BAA-334 / TIGR4).